The sequence spans 290 residues: Nucleoid occlusion protein (290 aa).

Residues 153 to 172 (EALAQRLGKGQSTIANKLRL) constitute a DNA-binding region (H-T-H motif).

Belongs to the ParB family.

Its subcellular location is the cytoplasm. It localises to the nucleoid. Its function is as follows. Effects nucleoid occlusion by binding relatively nonspecifically to DNA and preventing the assembly of the division machinery in the vicinity of the nucleoid, especially under conditions that disturb the cell cycle. It helps to coordinate cell division and chromosome segregation by preventing the formation of the Z ring through the nucleoid, which would cause chromosome breakage. This is Nucleoid occlusion protein from Bacillus cereus (strain ATCC 10987 / NRS 248).